The chain runs to 271 residues: Chitinase 6 (271 aa).

The signal sequence occupies residues Met1–Ala20. Positions Ala25–Val60 constitute a Chitin-binding type-1 domain. 6 disulfide bridges follow: Cys28–Cys36, Cys30–Cys42, Cys35–Cys49, Cys88–Cys137, Cys150–Cys159, and Cys239–Cys271. Glu132 functions as the Proton donor in the catalytic mechanism. Residue Asn268 is glycosylated (N-linked (GlcNAc...) asparagine).

Belongs to the glycosyl hydrolase 19 family. Chitinase class IV subfamily. As to expression, expressed in roots, leaves, sheaths and meristems.

The enzyme catalyses Random endo-hydrolysis of N-acetyl-beta-D-glucosaminide (1-&gt;4)-beta-linkages in chitin and chitodextrins.. May function in reproductive organs during embryogenesis and seed maturation. In Oryza sativa subsp. japonica (Rice), this protein is Chitinase 6 (Cht6).